A 525-amino-acid chain; its full sequence is GMP synthase [glutamine-hydrolyzing] (525 aa).

Residues 9–207 (RVLILDFGSQ…VLEIAGCEPL (199 aa)) form the Glutamine amidotransferase type-1 domain. The Nucleophile role is filled by C86. Residues H181 and E183 contribute to the active site. The region spanning 208 to 400 (WTPANIVEDA…LGLPYDMVYR (193 aa)) is the GMPS ATP-PPase domain. 235–241 (SGGVDSS) serves as a coordination point for ATP.

In terms of assembly, homodimer.

The catalysed reaction is XMP + L-glutamine + ATP + H2O = GMP + L-glutamate + AMP + diphosphate + 2 H(+). The protein operates within purine metabolism; GMP biosynthesis; GMP from XMP (L-Gln route): step 1/1. Its function is as follows. Catalyzes the synthesis of GMP from XMP. The chain is GMP synthase [glutamine-hydrolyzing] from Teredinibacter turnerae (strain ATCC 39867 / T7901).